Consider the following 212-residue polypeptide: ER lumen protein-retaining receptor 2 (212 aa).

Over 1–4 the chain is Lumenal; sequence MNVF. The helical transmembrane segment at 5-24 threads the bilayer; sequence RLSGDLCHLAAIIILLLKIW. The Cytoplasmic segment spans residues 25 to 32; that stretch reads NSRSCAGI. A helical membrane pass occupies residues 33–52; it reads SGKSQLLFAMVFTTRYLDLF. Residues 47–48 form an interaction with the K-D-E-L motif on target proteins region; it reads RY. Residues 53 to 58 are Lumenal-facing; it reads TSFISL. Residues 59 to 79 form a helical membrane-spanning segment; sequence YNTSMKVIYMGCAYATVYLIY. Topologically, residues 80 to 92 are cytoplasmic; that stretch reads MKFKATYDGNHDT. A helical membrane pass occupies residues 93 to 110; sequence FRVEFLVVPVGGLSVLVN. Residues 111–116 are Lumenal-facing; it reads HDFSPL. A helical transmembrane segment spans residues 117–135; the sequence is EILWTFSIYLESVAILPQL. The Cytoplasmic portion of the chain corresponds to 136–149; sequence FMISKTGEAETITT. The helical transmembrane segment at 150–168 threads the bilayer; sequence HYLFFLGLYRALYLFNWIW. The tract at residues 159–169 is interaction with the K-D-E-L motif on target proteins; the sequence is RALYLFNWIWR. The Lumenal segment spans residues 169–178; sequence RFSFEGFFDL. The chain crosses the membrane as a helical span at residues 179 to 199; sequence IAIVAGVVQTILYCDFFYLYV. Residues 200–212 lie on the Cytoplasmic side of the membrane; it reads TKVLKGKKLSLPA. Positions 204–207 are important for recycling of cargo proteins with the sequence motif K-D-E-L from the Golgi to the endoplasmic reticulum; that stretch reads KGKK.

This sequence belongs to the ERD2 family.

The protein resides in the endoplasmic reticulum membrane. It is found in the golgi apparatus membrane. The protein localises to the cytoplasmic vesicle. Its subcellular location is the COPI-coated vesicle membrane. In terms of biological role, receptor for the C-terminal sequence motif K-D-E-L that is present on endoplasmic reticulum resident proteins and that mediates their recycling from the Golgi back to the endoplasmic reticulum. Binding is pH dependent, and is optimal at pH 5-5.4. This Xenopus laevis (African clawed frog) protein is ER lumen protein-retaining receptor 2 (kdelr2).